The sequence spans 225 residues: Membrane protein (225 aa).

Over 1–20 the chain is Virion surface; that stretch reads MPNETNCTLDFEQSVQLFKE. Residues 21 to 41 traverse the membrane as a helical segment; sequence YNLFITAFLLFLTIILQYGYA. Residues 42–51 lie on the Intravirion side of the membrane; the sequence is TRSKVIYTLK. Residues 52 to 72 form a helical membrane-spanning segment; it reads MIVLWCFWPLNIAVGVISCTY. Topologically, residues 73–77 are virion surface; the sequence is PPNTG. Residues 78–98 traverse the membrane as a helical segment; the sequence is GLVAAIILTVFACLSFVGYWI. The Intravirion portion of the chain corresponds to 99-225; sequence QSIRLFKRCR…VATGGSSLYT (127 aa).

It belongs to the gammacoronaviruses M protein family. As to quaternary structure, homomultimer. Interacts with envelope E protein in the budding compartment of the host cell, which is located between endoplasmic reticulum and the Golgi complex. Forms a complex with HE and S proteins. Interacts with nucleocapsid N protein. This interaction probably participates in RNA packaging into the virus.

It localises to the virion membrane. Its subcellular location is the host Golgi apparatus membrane. Functionally, component of the viral envelope that plays a central role in virus morphogenesis and assembly via its interactions with other viral proteins. The sequence is that of Membrane protein from Avian infectious bronchitis virus (strain Beaudette) (IBV).